The following is a 200-amino-acid chain: Chromophore lyase CpcT/CpeT 2 (200 aa).

The protein belongs to the CpcT/CpeT biliprotein lyase family.

Its function is as follows. Covalently attaches a chromophore to Cys residue(s) of phycobiliproteins. The sequence is that of Chromophore lyase CpcT/CpeT 2 from Microcystis aeruginosa (strain NIES-843 / IAM M-2473).